The primary structure comprises 1028 residues: Contactin-3 (1028 aa).

Residues 1 to 19 (MMLSWKQLILLSFIGCLAG) form the signal peptide. Ig-like C2-type domains are found at residues 26–117 (PVFV…AKLQ), 122–208 (ENFK…ARVL), 227–313 (PKIE…GRLT), 318–402 (PYWV…AELK), 408–497 (PDFS…LVVT), and 499–593 (PTRI…AELI). Disulfide bonds link cysteine 50–cysteine 100, cysteine 144–cysteine 196, cysteine 249–cysteine 297, cysteine 339–cysteine 386, and cysteine 431–cysteine 479. Asparagine 65 and asparagine 193 each carry an N-linked (GlcNAc...) asparagine glycan. 4 N-linked (GlcNAc...) asparagine glycosylation sites follow: asparagine 377, asparagine 468, asparagine 489, and asparagine 538. A disulfide bridge links cysteine 521 with cysteine 577. Fibronectin type-III domains follow at residues 600–698 (PPEN…TEEA), 703–800 (APSE…SAEE), 805–901 (APSH…TKKT), and 902–998 (PPSQ…TSMD). The segment at 684-714 (GEPSLPSEKVRTEEAAPEVAPSEVSGGGGSR) is disordered. Residues asparagine 765, asparagine 860, asparagine 895, asparagine 913, asparagine 931, and asparagine 956 are each glycosylated (N-linked (GlcNAc...) asparagine). Residue serine 1002 is the site of GPI-anchor amidated serine attachment. Residues 1003-1028 (TSAISDIHPVSGYISVLLFFIVNALW) constitute a propeptide, removed in mature form.

This sequence belongs to the immunoglobulin superfamily. Contactin family. Interacts with PTPRG. In terms of tissue distribution, specifically expressed in brain. Not expressed in peripheral tissues such as heart, lung, liver, spleen, kidney and skeletal muscle. In brain, it is restricted to subsets of neurons such as Purkinje cells of the cerebellum, granule cells of the dentate gyrus, and neurons in the superficial layers of the cerebral cortex.

The protein localises to the cell membrane. In terms of biological role, contactins mediate cell surface interactions during nervous system development. Has some neurite outgrowth-promoting activity. This chain is Contactin-3 (Cntn3), found in Rattus norvegicus (Rat).